Reading from the N-terminus, the 98-residue chain is NADH-ubiquinone oxidoreductase chain 4L (98 aa).

The next 3 membrane-spanning stretches (helical) occupy residues 1–21 (MSLIHINVFLAFTTSLMGLLM), 29–49 (SLLCLEGMMLSLFIMATMMVL), and 61–81 (IILLVFAACEAALGLSLLVMI).

It belongs to the complex I subunit 4L family. Core subunit of respiratory chain NADH dehydrogenase (Complex I) which is composed of 45 different subunits.

Its subcellular location is the mitochondrion inner membrane. It carries out the reaction a ubiquinone + NADH + 5 H(+)(in) = a ubiquinol + NAD(+) + 4 H(+)(out). Functionally, core subunit of the mitochondrial membrane respiratory chain NADH dehydrogenase (Complex I) which catalyzes electron transfer from NADH through the respiratory chain, using ubiquinone as an electron acceptor. Part of the enzyme membrane arm which is embedded in the lipid bilayer and involved in proton translocation. In Ceratotherium simum (White rhinoceros), this protein is NADH-ubiquinone oxidoreductase chain 4L (MT-ND4L).